A 284-amino-acid chain; its full sequence is NADH-cytochrome b5 reductase 1 (284 aa).

Residues 7 to 27 (KLVVVIVIVVVPLLFKFIIGP) form a helical membrane-spanning segment. Positions 38–142 (NDFQSFPLVE…KGPRGNYHYE (105 aa)) constitute an FAD-binding FR-type domain. FAD is bound by residues 122-137 (GELK…GPRG) and 148-180 (HLGM…KVSL).

The protein belongs to the flavoprotein pyridine nucleotide cytochrome reductase family. In terms of assembly, monomer. Component of the 2-(3-amino-3-carboxypropyl)histidine synthase complex composed of DPH1, DPH2, KTI11/DPH3 and a NADH-dependent reductase, predominantly CBR1. Interacts with KTI11/DPH3. Interacts with STE20. FAD serves as cofactor.

It is found in the mitochondrion outer membrane. It catalyses the reaction 2 Fe(III)-[cytochrome b5] + NADH = 2 Fe(II)-[cytochrome b5] + NAD(+) + H(+). The catalysed reaction is 2 Fe(3+)-[Dph3] + NADH = 2 Fe(2+)-[Dph3] + NAD(+) + H(+). The protein operates within protein modification; peptidyl-diphthamide biosynthesis. Its activity is regulated as follows. Competitively inhibited by NAD(+). Inhibited by mercurials such as p-chloromercuribenzoate (PCMB) and HgCl(2). Enzymatic activity increases under anaerobic conditions. Functionally, NADH-dependent reductase for KTI11/DPH3 and cytochrome b5. Required for the first step of diphthamide biosynthesis, a post-translational modification of histidine which occurs in elongation factor 2. DPH1 and DPH2 transfer a 3-amino-3-carboxypropyl (ACP) group from S-adenosyl-L-methionine (SAM) to a histidine residue, the reaction is assisted by a reduction system comprising KTI11/DPH3 and a NADH-dependent reductase, predominantly CBR1. By reducing KTI11/DPH3, also involved in the formation of the tRNA wobble base modification mcm5s 2U (5-methoxycarbonylmethyl-2-thiouridine), mediated by the elongator complex. The cytochrome b5/NADH cytochrome b5 reductase electron transfer system supports the catalytic activity of several sterol biosynthetic enzymes. Plays a role in bud morphology. In Saccharomyces cerevisiae (strain ATCC 204508 / S288c) (Baker's yeast), this protein is NADH-cytochrome b5 reductase 1 (CBR1).